The chain runs to 120 residues: uncharacterized protein (120 aa).

Its subcellular location is the mitochondrion. This is an uncharacterized protein from Arabidopsis thaliana (Mouse-ear cress).